A 3987-amino-acid polypeptide reads, in one-letter code: Hybrid PKS-NRPS synthetase buaA (3987 aa).

In terms of domain architecture, Ketosynthase family 3 (KS3) spans 5 to 438 (NEPIAIVGSG…GANAHAIVES (434 aa)). Active-site for beta-ketoacyl synthase activity residues include cysteine 176, histidine 315, and histidine 358. Residues 546–872 (VFTGQGAQWP…RNADDVESFS (327 aa)) form a malonyl-CoA:ACP transacylase (MAT) domain region. Residues 939–1072 (HELLGVRVDS…GAVRLQLGAA (134 aa)) form an N-terminal hotdog fold region. Residues 939-1240 (HELLGVRVDS…VAPLVPVTQS (302 aa)) enclose the PKS/mFAS DH domain. The dehydratase (DH) domain stretch occupies residues 940 to 1238 (ELLGVRVDSL…LQVAPLVPVT (299 aa)). Histidine 970 acts as the Proton acceptor; for dehydratase activity in catalysis. The C-terminal hotdog fold stretch occupies residues 1087–1240 (MNDVNIEHFY…VAPLVPVTQS (154 aa)). Aspartate 1147 (proton donor; for dehydratase activity) is an active-site residue. Residues 1399-1583 (YLANLVKQLS…TSTPSHDVFM (185 aa)) are methyltransferase (MT) domain. Residues 2113 to 2285 (TYLLVGLTGE…LPGSVMNLAG (173 aa)) are ketoreductase (KR) domain. One can recognise a Carrier 1 domain in the interval 2397 to 2473 (RVLTNGLILT…AMVEDTMERM (77 aa)). Serine 2433 is subject to O-(pantetheine 4'-phosphoryl)serine. The segment at 2489–2561 (AADRPSAPSD…PPPSSVMSED (73 aa)) is disordered. Positions 2514–2525 (HNSEEQESHAME) are enriched in basic and acidic residues. A compositionally biased stretch (low complexity) spans 2532–2550 (STTSGGECSSTKESSSSEA). The tract at residues 2582-3001 (MGYGSLQFFF…QLVKMCAYME (420 aa)) is condensation (C) domain. Residues 3042–3448 (LDVAQARPEA…GQLYYEGRIA (407 aa)) are adenylation (A) (KR) domain. The Carrier 2 domain maps to 3564–3644 (ADLSETELAL…AMALKIRNSQ (81 aa)). Serine 3604 carries the O-(pantetheine 4'-phosphoryl)serine modification. Positions 3680–3916 (TVVLTGATGY…TGIAAAAVGA (237 aa)) are reductase (R) domain.

In the C-terminal section; belongs to the NRP synthetase family.

Its pathway is mycotoxin biosynthesis. Its function is as follows. Hybrid PKS-NRPS synthetase; part of the gene cluster that mediates the biosynthesis of burnettramic acids, an unusual class of bolaamphiphilic pyrrolizidinediones that display potent antibacterial, antifungal, and cytotoxic activities. The first step of the biosynthesis of burnettramic acids is the hydroxylation of proline by the proline hydroxylase buaE to generate 4-hydroxyproline. The PKS-NRPS buaA and trans-enoyl reductase buaC construct the highly reduced polyketide chain, and the condensation (C) domain of buaA then catalyzes the amide bond formation with the activated 4-hydroxyproline. This is followed by the R domain releasing the nascent polyketide-peptide directly via a Dieckmann condensation to afford a tetramic acid fused to the hydroxyproline, generating the bicyclic pyrrolidinedione moiety. The cytochrome P450 monooxygenases buaD and buaG are likely responsible for the multiple hydroxylations on the polyketide chain and its terminus, although in a heterologous context, buaD does not appear to be required. Therefore, while buaG may be a multifunctional cytochrome P450 monooxygenase, it cannot be ruled out that the two secondary alcohols on the polyketide chain could have an acetate origin. Finally, the glycosyltransferase buaB transfers beta-D-mannose to the aglycone burnettramic acid A to form burnettramic acid A. Burnettramic acid B is a minor cis-pyrrolizidine epimer of burnettramic acid A and it is likely that small amounts of it form naturally in acidic environments. The chain is Hybrid PKS-NRPS synthetase buaA from Petromyces alliaceus (Aspergillus alliaceus).